The primary structure comprises 578 residues: tRNA (guanine(26)-N(2))-dimethyltransferase (578 aa).

The region spanning 18-451 is the Trm1 methyltransferase domain; that stretch reads NVIRERNAEI…APPAVLWDIL (434 aa). Arginine 43 is an S-adenosyl-L-methionine binding site. The disordered stretch occupies residues 63-92; the sequence is EKALKKQRKKVKEQEDEKTTPVPEDPPVYE. Residues arginine 113 and aspartate 131 each coordinate S-adenosyl-L-methionine. Residues cysteine 295, cysteine 298, cysteine 335, and cysteine 338 each contribute to the Zn(2+) site. Residues 491-578 are disordered; the sequence is EANPKSRKSA…PKQPKLEATA (88 aa). Residues 564-578 are compositionally biased toward basic and acidic residues; sequence DVEHLPKQPKLEATA.

Belongs to the class I-like SAM-binding methyltransferase superfamily. Trm1 family.

The enzyme catalyses guanosine(26) in tRNA + 2 S-adenosyl-L-methionine = N(2)-dimethylguanosine(26) in tRNA + 2 S-adenosyl-L-homocysteine + 2 H(+). Functionally, dimethylates a single guanine residue at position 26 of most tRNAs using S-adenosyl-L-methionine as donor of the methyl groups. This is tRNA (guanine(26)-N(2))-dimethyltransferase from Drosophila melanogaster (Fruit fly).